Reading from the N-terminus, the 120-residue chain is Flagellar protein FliT (120 aa).

Positions 1 to 50 (MERHQHLLSEYQQILTLSEQMLMLATVENWNTLVDLEMTYLKAVENTANI) are required for homodimerization. Positions 60 to 98 (LQELLRQKLRSILENEIEIKRLLQRRLDKLSELVGQSTR) are fliD binding.

The protein belongs to the FliT family. As to quaternary structure, homodimer. Interacts with FliD and FlhC.

The protein resides in the cytoplasm. It is found in the cytosol. Functionally, dual-function protein that regulates the transcription of class 2 flagellar operons and that also acts as an export chaperone for the filament-capping protein FliD. As a transcriptional regulator, acts as an anti-FlhDC factor; it directly binds FlhC, thus inhibiting the binding of the FlhC/FlhD complex to class 2 promoters, resulting in decreased expression of class 2 flagellar operons. As a chaperone, effects FliD transition to the membrane by preventing its premature polymerization, and by directing it to the export apparatus. This chain is Flagellar protein FliT, found in Yersinia pestis (strain Pestoides F).